We begin with the raw amino-acid sequence, 520 residues long: Keratin, type II cytoskeletal 8 (520 aa).

Over residues 1–19 the composition is skewed to low complexity; the sequence is MSTYSKKTSYTVKSSSSGS. The segment at 1–20 is disordered; it reads MSTYSKKTSYTVKSSSSGSI. Residues 2 to 114 are head; that stretch reads STYSKKTSYT…DPNIQIVRTQ (113 aa). A Phosphoserine modification is found at serine 28. The coil 1A stretch occupies residues 115 to 150; that stretch reads EKEQIKTLNNRFASFIDKVRFLEQQNKMLETKWSLL. An IF rod domain is found at 115–426; the sequence is EKEQIKTLNN…KLLEGEEDRL (312 aa). A linker 1 region spans residues 151 to 166; it reads QNQTATRSNIDAMFEA. A coil 1B region spans residues 168 to 259; that stretch reads IANLRRQLDS…QIFEEEIREL (92 aa). Positions 260 to 283 are linker 12; that stretch reads QSQIKDTSVVVEMDNSRNLDMDAI. Residues 284–422 are coil 2; sequence VAEVRAQYED…ATYRKLLEGE (139 aa). The interval 423-520 is tail; that stretch reads EDRLATGIKA…VSESSEVVQD (98 aa).

Belongs to the intermediate filament family. As to quaternary structure, heterotetramer of two type I and two type II keratins. Keratin-8 associates with keratin-18. Expressed in simple epithelia.

Its subcellular location is the cytoplasm. The protein resides in the nucleus. The protein localises to the nucleoplasm. It is found in the nucleus matrix. Together with KRT19, helps to link the contractile apparatus to dystrophin at the costameres of striated muscle. The chain is Keratin, type II cytoskeletal 8 from Danio rerio (Zebrafish).